Consider the following 188-residue polypeptide: Ribosome-recycling factor (188 aa).

This sequence belongs to the RRF family.

The protein resides in the cytoplasm. Its function is as follows. Responsible for the release of ribosomes from messenger RNA at the termination of protein biosynthesis. May increase the efficiency of translation by recycling ribosomes from one round of translation to another. This Gluconacetobacter diazotrophicus (strain ATCC 49037 / DSM 5601 / CCUG 37298 / CIP 103539 / LMG 7603 / PAl5) protein is Ribosome-recycling factor.